Consider the following 92-residue polypeptide: Small ribosomal subunit protein uS19 (92 aa).

A disordered region spans residues 73–92 (EFSPTRSFRGHAGAKNKGKK). Over residues 80 to 92 (FRGHAGAKNKGKK) the composition is skewed to basic residues.

This sequence belongs to the universal ribosomal protein uS19 family.

In terms of biological role, protein S19 forms a complex with S13 that binds strongly to the 16S ribosomal RNA. This Flavobacterium psychrophilum (strain ATCC 49511 / DSM 21280 / CIP 103535 / JIP02/86) protein is Small ribosomal subunit protein uS19.